Here is a 329-residue protein sequence, read N- to C-terminus: Signal recognition particle receptor FtsY (329 aa).

Residues 127 to 134, 209 to 213, and 273 to 276 contribute to the GTP site; these read GVNGVGKT, DTAGR, and TKLD.

This sequence belongs to the GTP-binding SRP family. FtsY subfamily. Part of the signal recognition particle protein translocation system, which is composed of SRP and FtsY.

The protein resides in the cell membrane. It is found in the cytoplasm. The enzyme catalyses GTP + H2O = GDP + phosphate + H(+). Involved in targeting and insertion of nascent membrane proteins into the cytoplasmic membrane. Acts as a receptor for the complex formed by the signal recognition particle (SRP) and the ribosome-nascent chain (RNC). In Bacillus subtilis (strain 168), this protein is Signal recognition particle receptor FtsY.